We begin with the raw amino-acid sequence, 575 residues long: Serine/threonine-protein kinase Pink1, mitochondrial (575 aa).

The transit peptide at 1-51 (MSLLAYTNLLLQNGRIFRYYKKANIKKFIKKIIKLDLKSTPSEASVSRQTF) directs the protein to the mitochondrion. The Mitochondrial intermembrane portion of the chain corresponds to 52 to 94 (LSTGLNSVKNAVQLQARKLLINNVLERVTPTLNSDLKKKAAKR). Residues 95–118 (LFYGDSAPFFALVGVSLASGSGLL) traverse the membrane as a helical segment. The Cytoplasmic portion of the chain corresponds to 119–575 (TKDDELEGIC…KWIQELHIYN (457 aa)). Residue K193 participates in ATP binding. 2 positions are modified to phosphoserine; by autocatalysis: S202 and S204. Position 214 (E214) interacts with Mg(2+). Phosphothreonine; by autocatalysis is present on T305. D334 acts as the Proton acceptor in catalysis. N339 and D357 together coordinate Mg(2+).

It belongs to the protein kinase superfamily. Ser/Thr protein kinase family. The cofactor is Mg(2+). In terms of processing, proteolytically cleaved. In healthy cells, the precursor is continuously imported into mitochondria where it is proteolytically cleaved into its short form by the mitochondrial rhomboid protease rho-7 (8231301). The short form is then released into the cytosol where it rapidly undergoes proteasome-dependent degradation. In unhealthy cells, when cellular stress conditions lead to the loss of mitochondrial membrane potential, mitochondrial import is impaired leading to the precursor accumulating on the outer mitochondrial membrane (OMM). Post-translationally, autophosphorylated. Autophosphorylated on Ser-202, which activates kinase activity. Loss of mitochondrial membrane potential results in the precursor accumulating on the outer mitochondrial membrane (OMM) where it is activated by autophosphorylation at Ser-202. Autophosphorylation is sufficient and essential for selective recruitment of park to depolarized mitochondria, likely via Pink1-dependent phosphorylation of polyubiquitin chains. Also autophosphorylated at Ser-204 and Thr-305.

The protein localises to the mitochondrion outer membrane. It localises to the mitochondrion inner membrane. It is found in the cytoplasm. Its subcellular location is the cytosol. The catalysed reaction is L-seryl-[protein] + ATP = O-phospho-L-seryl-[protein] + ADP + H(+). It carries out the reaction L-threonyl-[protein] + ATP = O-phospho-L-threonyl-[protein] + ADP + H(+). Acts as a serine/threonine-protein kinase. Exhibits a substrate preference for proline at position P+1 and a general preference at several residues for basic residues such as arginine. Also exhibits moderate preferences for a phosphotyrosine at position P-3 and a tryptophan at P-5. Critical to mitochondrial homeostasis it mediates several pathways that maintain mitochondrial health and function Protects against mitochondrial dysfunction during cellular stress by phosphorylating mitochondrial proteins such as park and likely Drp1, to coordinate mitochondrial quality control mechanisms that remove and replace dysfunctional mitochondrial components. Depending on the severity of mitochondrial damage and/or dysfunction, activity ranges from preventing apoptosis and stimulating mitochondrial biogenesis to regulating mitochondrial dynamics and eliminating severely damaged mitochondria via mitophagy. Appears to be particularly important in maintaining the physiology and function of cells with high energy demands that are undergoing stress or altered metabolic environment, including spermatids, muscle cells and neurons such as the dopaminergic (DA) neurons. Mediates the translocation and activation of park at the outer membrane (OMM) of dysfunctional/depolarized mitochondria. At the OMM of damaged mitochondria, phosphorylates pre-existing polyubiquitin chains, the Pink1-phosphorylated polyubiquitin then recruits park from the cytosol to the OMM where park is fully activated by phosphorylation at 'Ser-94' by Pink1. When cellular stress results in irreversible mitochondrial damage, functions with park to promote the clearance of dysfunctional and/or depolarized mitochondria by selective autophagy (mitophagy). The Pink1-park pathway also promotes fission and/or inhibits fusion of damaged mitochondria, by phosphorylating and thus promoting the park-dependent degradation of proteins involved in mitochondrial fusion/fission such as Marf, Opa1 and fzo. This prevents the refusion of unhealthy mitochondria with the mitochondrial network or initiates mitochondrial fragmentation facilitating their later engulfment by autophagosomes. Also likely to promote mitochondrial fission independently of park and Atg7-mediated mitophagy, via the phosphorylation and activation of Drp1. Regulates motility of damaged mitochondria by phosphorylating Miro which likely promotes its park-dependent degradation by the proteasome; in motor neurons, this inhibits mitochondrial intracellular anterograde transport along the axons which probably increases the chance of the mitochondria being eliminated in the soma. The Pink1-park pathway is also involved in mitochondrial regeneration processes such as promoting mitochondrial biogenesis, activating localized mitochondrial repair, promoting selective turnover of mitochondrial proteins and initiating the mitochondrial import of endogenous proteins. Involved in mitochondrial biogenesis by promoting the park-dependent ubiquitination of transcriptional repressor Paris which leads to its subsequent proteasomal degradation and allows activation of the transcription factor srl. Functions with park to promote localized mitochondrial repair by activating the translation of specific nuclear-encoded mitochondrial RNAs (nc-mtRNAs) on the mitochondrial surface, including several key electron transport chain component nc-mtRNAs. During oogenesis, phosphorylates and inactivates larp on the membrane of defective mitochondria, thus impairing local translation and mtDNA replication and consequently, reducing transmission of deleterious mtDNA mutations to the mature oocyte. Phosphorylates the mitochondrial acyl-CoA dehydrogenase Mcad, and appears to be important for maintaining fatty acid and amino acid metabolism via a mechanism that is independent of it's role in maintaining production of ATP. This chain is Serine/threonine-protein kinase Pink1, mitochondrial, found in Pediculus humanus subsp. corporis (Body louse).